A 417-amino-acid polypeptide reads, in one-letter code: MKFWRKYTQQEMDEKITESLEKTLNYDNTKTIGIPGTKLDDTVFYDDHSFVKHSPYLRTFIQNPNHIGCHTYDKADILFGGTFDIERELIQLLAIDVLNGNDEEFDGYVTQGGTEANIQAMWVYRNYFKKERKAKHEEIAIITSADTHYSAYKGSDLLNIDIIKVPVDFYSRKIQENTLDSIVKEAKEIGKKYFIVISNMGTTMFGSVDDPDLYANIFDKYNLEYKIHVDGAFGGFIYPIDNKECKTDFSNKNVSSITLDGHKMLQAPYGTGIFVSRKNLIHNTLTKEATYIENLDVTLSGSRSGSNAVAIWMVLASYGPYGWMEKINKLRNRTKWLCKQLNDMRIKYYKEDSMNIVTIEEQYVNKEIAEKYFLVPEVHNPTNNWYKIVVMEHVELDILNSLVYDLRKFNKEHLKAM.

At lysine 263 the chain carries N6-(pyridoxal phosphate)lysine.

Belongs to the group II decarboxylase family. It depends on pyridoxal 5'-phosphate as a cofactor.

The protein resides in the cytoplasm. The catalysed reaction is L-tryptophan + H(+) = tryptamine + CO2. Its activity is regulated as follows. Inhibited by (S)-alpha-fluoromethyltryptophan. Catalyzes the decarboxylation of tryptophan to tryptamine. Tryptamine is a neurotransmitter that induces the release of serotonin, which is suggested to modulate gastrointestinal motility. Therefore, the tryptophan decarboxylase from the gut bacteria Clostridium sporogenes (strain ATCC 15579) may influence host brain and behavior. Has weak activity with tyrosine. Activity against phenylalanine is undetectable. The protein is Tryptophan decarboxylase of Clostridium sporogenes (strain ATCC 15579).